The primary structure comprises 490 residues: Bifunctional protein HldE (490 aa).

Residues 1–330 are ribokinase; sequence MERKNVESLF…GSMGFQHSDS (330 aa). 205-208 serves as a coordination point for ATP; that stretch reads NRKE. The active site involves aspartate 275. The segment at 356 to 490 is cytidylyltransferase; it reads FTNGCFDLLH…DKILRAYGEE (135 aa).

It in the N-terminal section; belongs to the carbohydrate kinase PfkB family. The protein in the C-terminal section; belongs to the cytidylyltransferase family. As to quaternary structure, homodimer.

It catalyses the reaction D-glycero-beta-D-manno-heptose 7-phosphate + ATP = D-glycero-beta-D-manno-heptose 1,7-bisphosphate + ADP + H(+). The enzyme catalyses D-glycero-beta-D-manno-heptose 1-phosphate + ATP + H(+) = ADP-D-glycero-beta-D-manno-heptose + diphosphate. It functions in the pathway nucleotide-sugar biosynthesis; ADP-L-glycero-beta-D-manno-heptose biosynthesis; ADP-L-glycero-beta-D-manno-heptose from D-glycero-beta-D-manno-heptose 7-phosphate: step 1/4. The protein operates within nucleotide-sugar biosynthesis; ADP-L-glycero-beta-D-manno-heptose biosynthesis; ADP-L-glycero-beta-D-manno-heptose from D-glycero-beta-D-manno-heptose 7-phosphate: step 3/4. In terms of biological role, catalyzes the phosphorylation of D-glycero-D-manno-heptose 7-phosphate at the C-1 position to selectively form D-glycero-beta-D-manno-heptose-1,7-bisphosphate. Functionally, catalyzes the ADP transfer from ATP to D-glycero-beta-D-manno-heptose 1-phosphate, yielding ADP-D-glycero-beta-D-manno-heptose. In Geobacter metallireducens (strain ATCC 53774 / DSM 7210 / GS-15), this protein is Bifunctional protein HldE.